A 171-amino-acid chain; its full sequence is MAETIRIIGIDPGLRYTGWGVIDLAGNRLQFVAAGTVSSDVQCDLASRLCQIHKGLSEVVHQFMPHEAAVEHVFVNKDATATLKLGQARAIALLVPAQANCPVFEYAPNKVKKSVIGVGHGAKEQIHMMVKVLLPRAEFDSNDAADALALALCHSMHRKRIDQSYQARMAI.

Active-site residues include Asp-11, Glu-71, and Asp-143. 3 residues coordinate Mg(2+): Asp-11, Glu-71, and Asp-143.

It belongs to the RuvC family. As to quaternary structure, homodimer which binds Holliday junction (HJ) DNA. The HJ becomes 2-fold symmetrical on binding to RuvC with unstacked arms; it has a different conformation from HJ DNA in complex with RuvA. In the full resolvosome a probable DNA-RuvA(4)-RuvB(12)-RuvC(2) complex forms which resolves the HJ. Mg(2+) is required as a cofactor.

It localises to the cytoplasm. It catalyses the reaction Endonucleolytic cleavage at a junction such as a reciprocal single-stranded crossover between two homologous DNA duplexes (Holliday junction).. The RuvA-RuvB-RuvC complex processes Holliday junction (HJ) DNA during genetic recombination and DNA repair. Endonuclease that resolves HJ intermediates. Cleaves cruciform DNA by making single-stranded nicks across the HJ at symmetrical positions within the homologous arms, yielding a 5'-phosphate and a 3'-hydroxyl group; requires a central core of homology in the junction. The consensus cleavage sequence is 5'-(A/T)TT(C/G)-3'. Cleavage occurs on the 3'-side of the TT dinucleotide at the point of strand exchange. HJ branch migration catalyzed by RuvA-RuvB allows RuvC to scan DNA until it finds its consensus sequence, where it cleaves and resolves the cruciform DNA. The protein is Crossover junction endodeoxyribonuclease RuvC of Bartonella tribocorum (strain CIP 105476 / IBS 506).